The primary structure comprises 887 residues: Alanine--tRNA ligase (887 aa).

4 residues coordinate Zn(2+): His565, His569, Cys674, and His678.

The protein belongs to the class-II aminoacyl-tRNA synthetase family. Zn(2+) serves as cofactor.

The protein localises to the cytoplasm. The enzyme catalyses tRNA(Ala) + L-alanine + ATP = L-alanyl-tRNA(Ala) + AMP + diphosphate. In terms of biological role, catalyzes the attachment of alanine to tRNA(Ala) in a two-step reaction: alanine is first activated by ATP to form Ala-AMP and then transferred to the acceptor end of tRNA(Ala). Also edits incorrectly charged Ser-tRNA(Ala) and Gly-tRNA(Ala) via its editing domain. The sequence is that of Alanine--tRNA ligase from Erythrobacter litoralis (strain HTCC2594).